The sequence spans 120 residues: DNA-directed RNA polymerase II subunit rpb11 (120 aa).

It belongs to the archaeal Rpo11/eukaryotic RPB11/RPC19 RNA polymerase subunit family. In terms of assembly, component of the RNA polymerase II (Pol II) complex consisting of 12 subunits.

It is found in the nucleus. Functionally, DNA-dependent RNA polymerase catalyzes the transcription of DNA into RNA using the four ribonucleoside triphosphates as substrates. Component of RNA polymerase II which synthesizes mRNA precursors and many functional non-coding RNAs. Pol II is the central component of the basal RNA polymerase II transcription machinery. It is composed of mobile elements that move relative to each other. RPB11 is part of the core element with the central large cleft. The polypeptide is DNA-directed RNA polymerase II subunit rpb11 (polr2j) (Dictyostelium discoideum (Social amoeba)).